A 212-amino-acid chain; its full sequence is uncharacterized protein (212 aa).

This is an uncharacterized protein from Acanthamoeba polyphaga (Amoeba).